The chain runs to 346 residues: Olfactory receptor 8G5 (346 aa).

Residues 1-60 (MIIYKQGITFLQKENNNTIHLNTMFFLSPAETHQRMAAENHSFVTKFILVGLTEKSELQL) are Extracellular-facing. N-linked (GlcNAc...) asparagine glycans are attached at residues Asn16 and Asn40. Residues 61 to 81 (PLFLVFLGIYVVTVLGNLGMI) traverse the membrane as a helical segment. Residues 82–89 (TLIGLSSH) are Cytoplasmic-facing. A helical transmembrane segment spans residues 90–110 (LHTPMYCFLSSLSFIDFCHST). Residues 111-134 (VITPKMLVNFVTEKNIISYPECMT) are Extracellular-facing. Cys132 and Cys214 are oxidised to a cystine. The chain crosses the membrane as a helical span at residues 135-155 (QLYFFLVFAIAECHMLAAMAY). Over 156 to 174 (DGYVAICSPLLYSIIISNK) the chain is Cytoplasmic. A helical transmembrane segment spans residues 175-195 (ACFSLILVVYVIGLICASAHI). Residues 196–232 (GCMFRVQFCKFDVINHYFCDLISILKLSCSSTYINEL) lie on the Extracellular side of the membrane. The helical transmembrane segment at 233–252 (LILIFSGINILVPSLTILSS) threads the bilayer. The Cytoplasmic segment spans residues 253–272 (YIFIIASILRIRYTEGRSKA). A helical transmembrane segment spans residues 273–293 (FSTCSSHISAVSVFFGSAAFM). At 294–306 (YLQPSSVSSMDQG) the chain is on the extracellular side. Residues 307-327 (KVSSVFYTIVVPMLNPLIYSL) traverse the membrane as a helical segment. At 328 to 346 (RNKDVHVALKKTLGKRTFL) the chain is on the cytoplasmic side.

It belongs to the G-protein coupled receptor 1 family.

The protein resides in the cell membrane. Functionally, odorant receptor. This chain is Olfactory receptor 8G5 (OR8G5), found in Homo sapiens (Human).